The primary structure comprises 506 residues: ESX-5 secretion system ATPase EccB5 (506 aa).

The helical transmembrane segment at 56 to 76 threads the bilayer; the sequence is VVASVSAALVICLGALLWSFI.

Belongs to the EccB family. Part of the ESX-5 / type VII secretion system (T7SS), which is composed of cytosolic and membrane components. The ESX-5 membrane complex is composed of EccB5, EccC5, EccD5 and EccE5.

The protein resides in the cell inner membrane. Its function is as follows. An ATPase. Part of the ESX-5 specialized secretion system, which is responsible for the secretion of EsxN and a number of PE_PGRS and PPE proteins, including PPE41. In Mycobacterium tuberculosis (strain CDC 1551 / Oshkosh), this protein is ESX-5 secretion system ATPase EccB5.